The following is a 678-amino-acid chain: DNA ligase (678 aa).

Residues 35-39 (DSVYD), 84-85 (SL), and E116 each bind NAD(+). Catalysis depends on K118, which acts as the N6-AMP-lysine intermediate. Positions 139, 178, 297, and 321 each coordinate NAD(+). 4 residues coordinate Zn(2+): C415, C418, C433, and C438. The BRCT domain maps to 600 to 678 (DGNQIFAGKT…EAQLLEMLNE (79 aa)).

It belongs to the NAD-dependent DNA ligase family. LigA subfamily. Mg(2+) serves as cofactor. Requires Mn(2+) as cofactor.

The catalysed reaction is NAD(+) + (deoxyribonucleotide)n-3'-hydroxyl + 5'-phospho-(deoxyribonucleotide)m = (deoxyribonucleotide)n+m + AMP + beta-nicotinamide D-nucleotide.. In terms of biological role, DNA ligase that catalyzes the formation of phosphodiester linkages between 5'-phosphoryl and 3'-hydroxyl groups in double-stranded DNA using NAD as a coenzyme and as the energy source for the reaction. It is essential for DNA replication and repair of damaged DNA. The polypeptide is DNA ligase (Nostoc punctiforme (strain ATCC 29133 / PCC 73102)).